Here is a 458-residue protein sequence, read N- to C-terminus: Siroheme synthase (458 aa).

Residues 1–203 (MDYLPLFFDL…GNLAAAEQLI (203 aa)) are precorrin-2 dehydrogenase /sirohydrochlorin ferrochelatase. NAD(+)-binding positions include 22-23 (TI) and 43-44 (PK). The residue at position 128 (S128) is a Phosphoserine. Positions 216–458 (GEVYLVGAGP…RCHEKLNWYK (243 aa)) are uroporphyrinogen-III C-methyltransferase. P225 is an S-adenosyl-L-methionine binding site. D248 acts as the Proton acceptor in catalysis. Catalysis depends on K270, which acts as the Proton donor. Residues 301 to 303 (GGD), I306, 331 to 332 (TA), M383, and G412 contribute to the S-adenosyl-L-methionine site.

This sequence in the N-terminal section; belongs to the precorrin-2 dehydrogenase / sirohydrochlorin ferrochelatase family. The protein in the C-terminal section; belongs to the precorrin methyltransferase family.

The enzyme catalyses uroporphyrinogen III + 2 S-adenosyl-L-methionine = precorrin-2 + 2 S-adenosyl-L-homocysteine + H(+). It carries out the reaction precorrin-2 + NAD(+) = sirohydrochlorin + NADH + 2 H(+). The catalysed reaction is siroheme + 2 H(+) = sirohydrochlorin + Fe(2+). It participates in cofactor biosynthesis; adenosylcobalamin biosynthesis; precorrin-2 from uroporphyrinogen III: step 1/1. The protein operates within cofactor biosynthesis; adenosylcobalamin biosynthesis; sirohydrochlorin from precorrin-2: step 1/1. It functions in the pathway porphyrin-containing compound metabolism; siroheme biosynthesis; precorrin-2 from uroporphyrinogen III: step 1/1. Its pathway is porphyrin-containing compound metabolism; siroheme biosynthesis; siroheme from sirohydrochlorin: step 1/1. It participates in porphyrin-containing compound metabolism; siroheme biosynthesis; sirohydrochlorin from precorrin-2: step 1/1. Functionally, multifunctional enzyme that catalyzes the SAM-dependent methylations of uroporphyrinogen III at position C-2 and C-7 to form precorrin-2 via precorrin-1. Then it catalyzes the NAD-dependent ring dehydrogenation of precorrin-2 to yield sirohydrochlorin. Finally, it catalyzes the ferrochelation of sirohydrochlorin to yield siroheme. The protein is Siroheme synthase of Saccharophagus degradans (strain 2-40 / ATCC 43961 / DSM 17024).